We begin with the raw amino-acid sequence, 287 residues long: Elongation factor Ts (287 aa).

Positions 80–83 (TDFL) are involved in Mg(2+) ion dislocation from EF-Tu.

Belongs to the EF-Ts family.

The protein localises to the cytoplasm. Its function is as follows. Associates with the EF-Tu.GDP complex and induces the exchange of GDP to GTP. It remains bound to the aminoacyl-tRNA.EF-Tu.GTP complex up to the GTP hydrolysis stage on the ribosome. In Pseudomonas putida (strain ATCC 47054 / DSM 6125 / CFBP 8728 / NCIMB 11950 / KT2440), this protein is Elongation factor Ts.